Consider the following 176-residue polypeptide: MKKTRQEKERMVEELTEKLSQAESAVLVDYRGLDVAQMNELRRQLGDSNVDFKVVKNTLTSIAAENAGIDEINQYLEGPVGIAFGYDDPVVPAKILNDFSKENEELEFKAAILGESVVGEEKVKNLAKLPSREELLGKVAGTFQAPIAGFAGACQGIIRKFVYAVDAVRQEKEDAS.

This sequence belongs to the universal ribosomal protein uL10 family. Part of the ribosomal stalk of the 50S ribosomal subunit. The N-terminus interacts with L11 and the large rRNA to form the base of the stalk. The C-terminus forms an elongated spine to which L12 dimers bind in a sequential fashion forming a multimeric L10(L12)X complex.

In terms of biological role, forms part of the ribosomal stalk, playing a central role in the interaction of the ribosome with GTP-bound translation factors. In Natranaerobius thermophilus (strain ATCC BAA-1301 / DSM 18059 / JW/NM-WN-LF), this protein is Large ribosomal subunit protein uL10.